Reading from the N-terminus, the 184-residue chain is MDFIKEQYNSLVLDLRKTFRNKRDGLSHILNVICLLLNALMIWKLLVVFTGCESPVVVVLSGSMEPGYYRGDTLALYHPPKIHAGDVVVYQINGRDIPIVHRILSLHTSKDNKFHLLSKGDNNNIDDRGLYDPHQYWLENEHVLGLSVGYTPYIGILTIWINEYPVVKWAIVSIMLIMILMGYE.

The Cytoplasmic segment spans residues 1–28; it reads MDFIKEQYNSLVLDLRKTFRNKRDGLSH. The chain crosses the membrane as a helical; Signal-anchor for type II membrane protein span at residues 29 to 49; it reads ILNVICLLLNALMIWKLLVVF. Topologically, residues 50–184 are lumenal; sequence TGCESPVVVV…MLIMILMGYE (135 aa). Residues Ser63, His101, and Asp127 each act as charge relay system in the active site. The segment at 170-181 is C-terminal short (CTS) helix; sequence AIVSIMLIMILM.

This sequence belongs to the peptidase S26B family. In terms of assembly, component of the signal peptidase complex (SPC) composed of a catalytic subunit SEC11/SPC21 and three accessory subunits SPC25, SPC3/SPC22, SPC1/SPC12. Within the complex, interacts with SPC25. The complex induces a local thinning of the ER membrane which is used to measure the length of the signal peptide (SP) h-region of protein substrates. This ensures the selectivity of the complex towards h-regions shorter than 18-20 amino acids. The complex interacts with the SEC61 channel-forming translocon complex and is involved in the import of classical signal sequence-containing proteins. Phosphorylated. Phosphorylation increases catalytic activity.

It localises to the endoplasmic reticulum membrane. It catalyses the reaction Cleavage of hydrophobic, N-terminal signal or leader sequences from secreted and periplasmic proteins.. With respect to regulation, phosphorylation increases catalytic activity. Ca(2+) slightly increases catalytic activity in vitro. Its function is as follows. Catalytic component of the signal peptidase complex (SPC) which catalyzes the cleavage of N-terminal signal sequences from nascent proteins as they are translocated into the lumen of the endoplasmic reticulum. Specifically cleaves N-terminal signal peptides that contain a hydrophobic alpha-helix (h-region) shorter than 18-20 amino acids. This is Signal peptidase complex catalytic subunit SEC11 from Plasmodium falciparum (isolate 3D7).